Here is a 46-residue protein sequence, read N- to C-terminus: MSEENKENGFNHVKTFTKIIFIFSVLVFNDNEYKITDAAVNLFIQI.

This is an uncharacterized protein from Escherichia coli (strain K12).